Consider the following 66-residue polypeptide: Photosystem II reaction center protein J (66 aa).

A helical transmembrane segment spans residues 37-57; it reads LWLVATAGGMAVLFVVGLFFY.

It belongs to the PsbJ family. PSII is composed of 1 copy each of membrane proteins PsbA, PsbB, PsbC, PsbD, PsbE, PsbF, PsbH, PsbI, PsbJ, PsbK, PsbL, PsbM, PsbT, PsbX, PsbY, PsbZ, Psb30/Ycf12, peripheral proteins PsbO, CyanoQ (PsbQ), PsbU, PsbV and a large number of cofactors. It forms dimeric complexes.

It localises to the cellular thylakoid membrane. Functionally, one of the components of the core complex of photosystem II (PSII). PSII is a light-driven water:plastoquinone oxidoreductase that uses light energy to abstract electrons from H(2)O, generating O(2) and a proton gradient subsequently used for ATP formation. It consists of a core antenna complex that captures photons, and an electron transfer chain that converts photonic excitation into a charge separation. The protein is Photosystem II reaction center protein J of Synechococcus sp. (strain WH7803).